Here is a 408-residue protein sequence, read N- to C-terminus: BTB/POZ and MATH domain-containing protein 3 (408 aa).

The 135-residue stretch at 24-158 (NGSHQFTIQG…DDCLVINCTV (135 aa)) folds into the MATH domain. In terms of domain architecture, BTB spans 194–261 (CDIAFQVGDE…IYTDVLPNVH (68 aa)).

It belongs to the Tdpoz family. Homodimer or heterodimer with BPM3 and BPM5. Interacts with CUL3A and CUL3B. Interacts with RAP2-4 and RAP2-13. Binds to MYB56 at the promoter of FLOWERING LOCUS T (FT). Ubiquitous.

Its subcellular location is the nucleus. It is found in the cytoplasm. The protein operates within protein modification; protein ubiquitination. May act as a substrate-specific adapter of an E3 ubiquitin-protein ligase complex (CUL3-RBX1-BTB) which mediates the ubiquitination and subsequent proteasomal degradation of target proteins. This Arabidopsis thaliana (Mouse-ear cress) protein is BTB/POZ and MATH domain-containing protein 3.